Reading from the N-terminus, the 822-residue chain is Dimethyl sulfoxide/trimethylamine N-oxide reductase (822 aa).

A signal peptide (tat-type signal) is located at residues 1-42; it reads MTKLSGQELHAELSRRAFLSYTAAVGALGLCGTSLLAQGARA. Mo-bis(molybdopterin guanine dinucleotide)-binding positions include tryptophan 158, 158–160, serine 189, 232–233, 262–263, 283–285, 364–365, arginine 368, asparagine 476, histidine 480, 500–501, arginine 523, aspartate 553, 683–686, arginine 689, 691–693, asparagine 779, and 796–797; these read WKS, KT, IN, QTD, WS, QD, ASHP, HSQ, and GQ.

This sequence belongs to the prokaryotic molybdopterin-containing oxidoreductase family. In terms of assembly, homodimer. Requires Mo-bis(molybdopterin guanine dinucleotide) as cofactor. Post-translationally, predicted to be exported by the Tat system. The position of the signal peptide cleavage has been experimentally proven.

Its subcellular location is the periplasm. The enzyme catalyses dimethyl sulfide + a menaquinone + H2O = dimethyl sulfoxide + a menaquinol. It carries out the reaction trimethylamine + 2 Fe(III)-[cytochrome c] + H2O = trimethylamine N-oxide + 2 Fe(II)-[cytochrome c] + 3 H(+). Functionally, catalyzes the reduction of dimethyl sulfoxide (DMSO) and trimethylamine N-oxide (TMAO) to dimethyl sulfide (DMS) and trimethylamine, respectively. The terminal DMSO reductase can also use various sulfoxides and N-oxide compounds as terminal electron acceptor in addition to DMSO and TMAO. The sequence is that of Dimethyl sulfoxide/trimethylamine N-oxide reductase (dmsA) from Cereibacter sphaeroides (Rhodobacter sphaeroides).